The sequence spans 137 residues: Ribosome-binding factor A (137 aa).

It belongs to the RbfA family. In terms of assembly, monomer. Binds 30S ribosomal subunits, but not 50S ribosomal subunits or 70S ribosomes.

The protein resides in the cytoplasm. In terms of biological role, one of several proteins that assist in the late maturation steps of the functional core of the 30S ribosomal subunit. Associates with free 30S ribosomal subunits (but not with 30S subunits that are part of 70S ribosomes or polysomes). Required for efficient processing of 16S rRNA. May interact with the 5'-terminal helix region of 16S rRNA. The polypeptide is Ribosome-binding factor A (Erwinia tasmaniensis (strain DSM 17950 / CFBP 7177 / CIP 109463 / NCPPB 4357 / Et1/99)).